The chain runs to 523 residues: MPTVEELYRNYGILADATETAGQHKDAYQVILDGVKGGAKEKRLAAQFIPKFFKHFPELADSAINAQLDLCEDEDVSIRRQAIKELPQFATGDNLPRVADILTQLLQSDDSAEFNLVNNALLSIFKMDAKGTLGGLFSQILQGEDIVRERAIKFLSTKLKTLPEEVLTKEVEEFILAESKKVLEDVTGEEFVLFMKILSGLKSLQTVSGRQQLVELVAEQADLEQTFNPSDPDCVDRLLQCTRQAVPLFSKNVHSTKFVTYFCEHVLPNLSALTTPVEGLDIQLEVLKLLAEMSSFCGDMEKLESNLKKLFDKLLEYMPLPPEEAENGENAGGEEPKLQFSYVECLLYSFHQLGRKLPDFLTAKLNAEKLKDFKIRLQYFARGLQVYIRQLRLALQGKTGEALKTEENKIKVVALKITNNINVLIKDLFHIPPSYKSTVTLSWKPVQKADANQKRTSEDTTSSSPPKKASAGPKRDARQIYNPPSGKYSSNLGSFSYEQRGGFRGGRGRGWGGRGNRSRGRIY.

Residues 1–360 form an ARM-like and Heat-like helical repeats region; that stretch reads MPTVEELYRN…HQLGRKLPDF (360 aa). Residues 446–523 are disordered; that stretch reads VQKADANQKR…RGNRSRGRIY (78 aa). The Nuclear localization signal signature appears at 454–475; sequence KRTSEDTTSSSPPKKASAGPKR. The segment covering 460–471 has biased composition (low complexity); sequence TTSSSPPKKASA. Over residues 487 to 497 the composition is skewed to polar residues; it reads KYSSNLGSFSY. Positions 502 to 515 are enriched in gly residues; it reads GFRGGRGRGWGGRG.

The protein belongs to the API5 family. Monomer.

It localises to the nucleus. The protein localises to the cytoplasm. Antiapoptotic factor that may have a role in protein assembly. This is Apoptosis inhibitor 5 (API5) from Gallus gallus (Chicken).